The following is a 502-amino-acid chain: Probable cytochrome P450 6a23 (502 aa).

Cys445 contacts heme.

Belongs to the cytochrome P450 family. Heme is required as a cofactor.

Its subcellular location is the endoplasmic reticulum membrane. It is found in the microsome membrane. May be involved in the metabolism of insect hormones and in the breakdown of synthetic insecticides. The protein is Probable cytochrome P450 6a23 (Cyp6a23) of Drosophila melanogaster (Fruit fly).